The chain runs to 123 residues: Small ribosomal subunit protein uS13 (123 aa).

A disordered region spans residues 93–123 (HRKGLPVRGQNTKNNARTRKGPAKAIAGKKK). Basic residues predominate over residues 108 to 123 (ARTRKGPAKAIAGKKK).

This sequence belongs to the universal ribosomal protein uS13 family. In terms of assembly, part of the 30S ribosomal subunit. Forms a loose heterodimer with protein S19. Forms two bridges to the 50S subunit in the 70S ribosome.

In terms of biological role, located at the top of the head of the 30S subunit, it contacts several helices of the 16S rRNA. In the 70S ribosome it contacts the 23S rRNA (bridge B1a) and protein L5 of the 50S subunit (bridge B1b), connecting the 2 subunits; these bridges are implicated in subunit movement. Contacts the tRNAs in the A and P-sites. The sequence is that of Small ribosomal subunit protein uS13 from Leuconostoc mesenteroides subsp. mesenteroides (strain ATCC 8293 / DSM 20343 / BCRC 11652 / CCM 1803 / JCM 6124 / NCDO 523 / NBRC 100496 / NCIMB 8023 / NCTC 12954 / NRRL B-1118 / 37Y).